A 312-amino-acid polypeptide reads, in one-letter code: Olfactory receptor 6C2 (312 aa).

The Extracellular portion of the chain corresponds to M1–V23. N-linked (GlcNAc...) asparagine glycosylation occurs at N3. A helical membrane pass occupies residues L24–I44. The Cytoplasmic segment spans residues T45 to H52. Residues L53 to T73 traverse the membrane as a helical segment. Topologically, residues V74–S97 are extracellular. N-linked (GlcNAc...) asparagine glycosylation is present at N82. An intrachain disulfide couples C95 to C187. A helical transmembrane segment spans residues Q98 to Y118. Over D119 to R137 the chain is Cytoplasmic. Residues V138–L158 form a helical membrane-spanning segment. The Extracellular portion of the chain corresponds to S159–Q195. Residues M196–S215 traverse the membrane as a helical segment. The Cytoplasmic portion of the chain corresponds to Y216–A235. A helical transmembrane segment spans residues F236 to I256. The Extracellular portion of the chain corresponds to Y257–N269. A helical transmembrane segment spans residues K270–L290. The Cytoplasmic portion of the chain corresponds to R291 to K312.

The protein belongs to the G-protein coupled receptor 1 family.

The protein localises to the cell membrane. Its function is as follows. Odorant receptor. This is Olfactory receptor 6C2 (OR6C2) from Homo sapiens (Human).